A 460-amino-acid chain; its full sequence is tRNA hydroxylation protein P (460 aa).

It belongs to the peptidase U32 family.

Involved in prephenate-dependent formation of 5-hydroxyuridine (ho5U) modification at position 34 in tRNAs, the first step in 5-carboxymethoxyuridine (cmo5U) biosynthesis. The sequence is that of tRNA hydroxylation protein P from Haemophilus influenzae (strain ATCC 51907 / DSM 11121 / KW20 / Rd).